Here is a 210-residue protein sequence, read N- to C-terminus: ATP-dependent Clp protease proteolytic subunit (210 aa).

Residue Ser114 is the Nucleophile of the active site. Residue His139 is part of the active site.

The protein belongs to the peptidase S14 family. Fourteen ClpP subunits assemble into 2 heptameric rings which stack back to back to give a disk-like structure with a central cavity, resembling the structure of eukaryotic proteasomes.

Its subcellular location is the cytoplasm. It carries out the reaction Hydrolysis of proteins to small peptides in the presence of ATP and magnesium. alpha-casein is the usual test substrate. In the absence of ATP, only oligopeptides shorter than five residues are hydrolyzed (such as succinyl-Leu-Tyr-|-NHMec, and Leu-Tyr-Leu-|-Tyr-Trp, in which cleavage of the -Tyr-|-Leu- and -Tyr-|-Trp bonds also occurs).. Cleaves peptides in various proteins in a process that requires ATP hydrolysis. Has a chymotrypsin-like activity. Plays a major role in the degradation of misfolded proteins. The protein is ATP-dependent Clp protease proteolytic subunit of Janthinobacterium sp. (strain Marseille) (Minibacterium massiliensis).